A 176-amino-acid chain; its full sequence is MDATAAITGNVDKTQIPPLNQKRILAFVNHFLVSTCTFLNEFALGCETKFVEMERQLQKTEAALIILEAKLASIPTEHHVATEATEAPAISNQQRNEEASMVDTTEPPTTENPTEPELPPESVGVRACEDQRYRKFFKMVQVGVPAPAVKQKMQSEGLEPRILDTPDLILADGQRE.

Residues Glu-47 to Ile-74 adopt a coiled-coil conformation. Disordered regions lie at residues Ala-84–Val-123 and Lys-152–Glu-176. Low complexity predominate over residues Thr-104–Glu-115.

The protein belongs to the CCDC53 family. As to quaternary structure, component of the WASH complex.

The protein resides in the early endosome. Functionally, acts at least in part as component of the WASH complex which may regulate wash nucleation-promoting factor (NPF) activity and is required for its membrane targeting during endosomal sorting. During embryogenesis, not involved in the wash-dependent developmental migration of hemocytes anteriorly from the tail. This is WASH complex subunit 3 from Drosophila melanogaster (Fruit fly).